A 491-amino-acid polypeptide reads, in one-letter code: Maintenance of mitochondrial morphology protein 1 (491 aa).

The Lumenal segment spans residues 1-22; sequence MTFQQNEPSAVPAQSSLSFTQG. A helical membrane pass occupies residues 23–43; that stretch reads FLLGQLSVVLLIGAFIKFFIF. Residues 44-491 are Cytoplasmic-facing; the sequence is GEAPPPPSRG…GTLPGGAAAN (448 aa). Disordered regions lie at residues 50–95, 275–325, and 392–491; these read PSRG…PVPS, PPLH…SPKS, and RTGV…AAAN. The segment covering 54–64 has biased composition (basic residues); it reads LSHRASTHRRS. Composition is skewed to polar residues over residues 65–78 and 85–95; these read NSIY…GTSR and STSNVLRPVPS. In terms of domain architecture, SMP-LTD spans 131 to 384; it reads QPESLDWFNV…EPRVQVVGLP (254 aa). Over residues 275–287 the composition is skewed to pro residues; it reads PPLHTPSPSPSPP. 2 stretches are compositionally biased toward polar residues: residues 300–315 and 403–412; these read TNGS…NAQE and TGSNAASRSA. Basic and acidic residues predominate over residues 422 to 434; that stretch reads RADDIGREPDGLR.

The protein belongs to the MMM1 family. In terms of assembly, homodimer. Component of the ER-mitochondria encounter structure (ERMES) or MDM complex, composed of mmm1, mdm10, mdm12 and mdm34. A mmm1 homodimer associates with one molecule of mdm12 on each side in a pairwise head-to-tail manner, and the SMP-LTD domains of mmm1 and mdm12 generate a continuous hydrophobic tunnel for phospholipid trafficking.

Its subcellular location is the endoplasmic reticulum membrane. Its function is as follows. Component of the ERMES/MDM complex, which serves as a molecular tether to connect the endoplasmic reticulum (ER) and mitochondria. Components of this complex are involved in the control of mitochondrial shape and protein biogenesis, and function in nonvesicular lipid trafficking between the ER and mitochondria. The mdm12-mmm1 subcomplex functions in the major beta-barrel assembly pathway that is responsible for biogenesis of all outer membrane beta-barrel proteins, and acts in a late step after the SAM complex. The mdm10-mdm12-mmm1 subcomplex further acts in the TOM40-specific pathway after the action of the mdm12-mmm1 complex. Essential for establishing and maintaining the structure of mitochondria and maintenance of mtDNA nucleoids. The protein is Maintenance of mitochondrial morphology protein 1 of Aspergillus flavus (strain ATCC 200026 / FGSC A1120 / IAM 13836 / NRRL 3357 / JCM 12722 / SRRC 167).